The chain runs to 249 residues: MIDALMANILWLVFIIIGGVLISWSVHFVPVGGAPAAMAQATGIGTGTVQLAAGAGLTGLVSAGFMMNVTDNLPLILASGAVGAMIMISVTMIVGTWVYVYGVGCVPSSAKVKYDPITKYRQDLYVSQGTEGHGLPTVSFVSGVIGGLLGGIGGALVYYSLIEVGLTAGLSTGTSSGVTGHELVGIAAMFAIGIFFVNAVIPSYNIGGTIEGFHDPKWKKWPKAVISSFVATILCAIVAVIAISQLGGI.

The next 6 helical transmembrane spans lie at 9-29, 47-67, 75-95, 138-158, 183-203, and 224-244; these read ILWL…VHFV, GTVQ…GFMM, LILA…MIVG, VSFV…ALVY, LVGI…VIPS, and AVIS…IAIS.

It belongs to the MtrD family. In terms of assembly, the complex is composed of 8 subunits; MtrA, MtrB, MtrC, MtrD, MtrE, MtrF, MtrG and MtrH.

The protein resides in the cell membrane. It catalyses the reaction 5-methyl-5,6,7,8-tetrahydromethanopterin + coenzyme M + 2 Na(+)(in) = 5,6,7,8-tetrahydromethanopterin + methyl-coenzyme M + 2 Na(+)(out). It functions in the pathway one-carbon metabolism; methanogenesis from CO(2); methyl-coenzyme M from 5,10-methylene-5,6,7,8-tetrahydromethanopterin: step 2/2. In terms of biological role, part of a complex that catalyzes the formation of methyl-coenzyme M and tetrahydromethanopterin from coenzyme M and methyl-tetrahydromethanopterin. This is an energy-conserving, sodium-ion translocating step. This Methanosarcina acetivorans (strain ATCC 35395 / DSM 2834 / JCM 12185 / C2A) protein is Tetrahydromethanopterin S-methyltransferase subunit D.